We begin with the raw amino-acid sequence, 93 residues long: Long neurotoxin 2 (93 aa).

Residues 1 to 21 (MKILLLTLVVVTIVCLDLAYT) form the signal peptide. Cystine bridges form between cysteine 24-cysteine 42, cysteine 35-cysteine 63, cysteine 48-cysteine 52, cysteine 67-cysteine 78, and cysteine 79-cysteine 84.

It belongs to the three-finger toxin family. Long-chain subfamily. Type II alpha-neurotoxin sub-subfamily. In terms of tissue distribution, expressed by the venom gland.

Its subcellular location is the secreted. Its function is as follows. Binds with high affinity to muscular (alpha-1/CHRNA1) and neuronal (alpha-7/CHRNA7) nicotinic acetylcholine receptor (nAChR) and inhibits acetylcholine from binding to the receptor, thereby impairing neuromuscular and neuronal transmission. This is Long neurotoxin 2 from Hydrophis hardwickii (Hardwick's spine-bellied seasnake).